The primary structure comprises 514 residues: Steroid 17-alpha-hydroxylase/17,20 lyase (514 aa).

Cys445 contacts heme.

It belongs to the cytochrome P450 family. Requires heme as cofactor.

The protein resides in the membrane. It carries out the reaction a C21-steroid + reduced [NADPH--hemoprotein reductase] + O2 = a 17alpha-hydroxy-C21-steroid + oxidized [NADPH--hemoprotein reductase] + H2O + H(+). The catalysed reaction is 17alpha-hydroxyprogesterone + reduced [NADPH--hemoprotein reductase] + O2 = androst-4-ene-3,17-dione + acetate + oxidized [NADPH--hemoprotein reductase] + H2O + 2 H(+). The enzyme catalyses 17alpha-hydroxypregnenolone + reduced [NADPH--hemoprotein reductase] + O2 = 3beta-hydroxyandrost-5-en-17-one + acetate + oxidized [NADPH--hemoprotein reductase] + H2O + 2 H(+). It participates in lipid metabolism; steroid biosynthesis. Conversion of pregnenolone and progesterone to their 17-alpha-hydroxylated products and subsequently to dehydroepiandrosterone (DHEA) and androstenedione. Catalyzes both the 17-alpha-hydroxylation and the 17,20-lyase reaction. The protein is Steroid 17-alpha-hydroxylase/17,20 lyase (cyp17a1) of Ictalurus punctatus (Channel catfish).